A 350-amino-acid chain; its full sequence is Nicotinate-nucleotide--dimethylbenzimidazole phosphoribosyltransferase (350 aa).

The active-site Proton acceptor is the glutamate 317.

This sequence belongs to the CobT family.

The catalysed reaction is 5,6-dimethylbenzimidazole + nicotinate beta-D-ribonucleotide = alpha-ribazole 5'-phosphate + nicotinate + H(+). The protein operates within nucleoside biosynthesis; alpha-ribazole biosynthesis; alpha-ribazole from 5,6-dimethylbenzimidazole: step 1/2. Its function is as follows. Catalyzes the synthesis of alpha-ribazole-5'-phosphate from nicotinate mononucleotide (NAMN) and 5,6-dimethylbenzimidazole (DMB). This Shewanella putrefaciens (strain CN-32 / ATCC BAA-453) protein is Nicotinate-nucleotide--dimethylbenzimidazole phosphoribosyltransferase.